We begin with the raw amino-acid sequence, 119 residues long: Large ribosomal subunit protein uL14 (119 aa).

Belongs to the universal ribosomal protein uL14 family. In terms of assembly, part of the 50S ribosomal subunit. Forms a cluster with proteins L3 and L19. In the 70S ribosome, L14 and L19 interact and together make contacts with the 16S rRNA in bridges B5 and B8.

Its function is as follows. Binds to 23S rRNA. Forms part of two intersubunit bridges in the 70S ribosome. In Wolbachia sp. subsp. Brugia malayi (strain TRS), this protein is Large ribosomal subunit protein uL14.